We begin with the raw amino-acid sequence, 435 residues long: Serine/threonine-protein kinase 40 (435 aa).

Residues 1–10 (MKRRASDRGA) show a composition bias toward basic and acidic residues. The interval 1–25 (MKRRASDRGAGETSARAKALGSGIS) is disordered. In terms of domain architecture, Protein kinase spans 35–332 (FILGPRLGNS…DVLEALSAII (298 aa)). ATP is bound by residues 41–49 (LGNSPVPSI) and lysine 66. The Proton acceptor role is filled by aspartate 197.

It belongs to the protein kinase superfamily. CAMK Ser/Thr protein kinase family.

It is found in the nucleus. The protein localises to the cytoplasm. It catalyses the reaction L-seryl-[protein] + ATP = O-phospho-L-seryl-[protein] + ADP + H(+). The enzyme catalyses L-threonyl-[protein] + ATP = O-phospho-L-threonyl-[protein] + ADP + H(+). In terms of biological role, may be a negative regulator of NF-kappa-B and p53-mediated gene transcription. The sequence is that of Serine/threonine-protein kinase 40 (STK40) from Pongo abelii (Sumatran orangutan).